Here is a 267-residue protein sequence, read N- to C-terminus: Dichloromethane dehalogenase (267 aa).

In terms of domain architecture, GST N-terminal spans 3–85 (TKLRYLHHPA…YLSEKYDCSS (83 aa)). The 134-residue stretch at 91-224 (TLEERGHIQQ…AWQYENVRKY (134 aa)) folds into the GST C-terminal domain.

The protein belongs to the GST superfamily. In terms of assembly, homohexamer.

It is found in the cytoplasm. The enzyme catalyses dichloromethane + H2O = formaldehyde + 2 chloride + 2 H(+). The protein operates within xenobiotic degradation; dichloromethane degradation. The polypeptide is Dichloromethane dehalogenase (dcmA) (Methylophilus leisingeri (strain DSM 6813 / VKM B-2013 / DM11)).